The chain runs to 192 residues: Ion-translocating oxidoreductase complex subunit B (192 aa).

Residues 1–26 (MSAVWIAVIAISLLGLIFGLILGYAS) form a hydrophobic region. In terms of domain architecture, 4Fe-4S spans 32–91 (QDDPVVEKIDELLPQSQCGQCGYPGCRPYAEAVGAQGEKINRCAPGGEAVMLKIAALLNV). Cys49, Cys52, Cys57, Cys74, Cys117, Cys120, Cys123, Cys127, Cys147, Cys150, Cys153, and Cys157 together coordinate [4Fe-4S] cluster. 4Fe-4S ferredoxin-type domains are found at residues 108-137 (MLAV…GATR) and 138-167 (AMHT…LVPV).

It belongs to the 4Fe4S bacterial-type ferredoxin family. RnfB subfamily. In terms of assembly, the complex is composed of six subunits: RnfA, RnfB, RnfC, RnfD, RnfE and RnfG. It depends on [4Fe-4S] cluster as a cofactor.

It localises to the cell inner membrane. Functionally, part of a membrane-bound complex that couples electron transfer with translocation of ions across the membrane. This is Ion-translocating oxidoreductase complex subunit B from Klebsiella pneumoniae (strain 342).